The primary structure comprises 369 residues: Flagellar P-ring protein (369 aa).

The signal sequence occupies residues 1–22; the sequence is MFNVRQLIATTLLLSCAFAAQA.

Belongs to the FlgI family. As to quaternary structure, the basal body constitutes a major portion of the flagellar organelle and consists of four rings (L,P,S, and M) mounted on a central rod.

It localises to the periplasm. It is found in the bacterial flagellum basal body. In terms of biological role, assembles around the rod to form the L-ring and probably protects the motor/basal body from shearing forces during rotation. The chain is Flagellar P-ring protein from Pseudomonas putida (strain ATCC 47054 / DSM 6125 / CFBP 8728 / NCIMB 11950 / KT2440).